A 315-amino-acid chain; its full sequence is 2-oxoglutarate and iron-dependent oxygenase domain-containing protein 3 (315 aa).

Residues 1–32 (MAPQRRGPPRVPEGNSAAERRHANSTKKDRLP) are disordered. The Cytoplasmic portion of the chain corresponds to 1–41 (MAPQRRGPPRVPEGNSAAERRHANSTKKDRLPQEAQRTWLR). The segment covering 18–32 (AERRHANSTKKDRLP) has biased composition (basic and acidic residues). Residues 42-62 (IVALGVSLALVTFLLWSSAGI) form a helical; Signal-anchor for type II membrane protein membrane-spanning segment. Topologically, residues 63 to 315 (DDDVAEVVAH…DHGIEDPVLT (253 aa)) are lumenal. The Fe2OG dioxygenase domain maps to 203–305 (KPTFFSRINS…AITIAFTCNP (103 aa)). Residue N211 is glycosylated (N-linked (GlcNAc...) asparagine). The Fe cation site is built by H226 and D228. A glycan (N-linked (GlcNAc...) asparagine) is linked at N263. Fe cation is bound at residue H284. R294 is an active-site residue. R294 contributes to the 2-oxoglutarate binding site.

This sequence belongs to the OGFOD3 family. Fe(2+) serves as cofactor. The cofactor is L-ascorbate.

It localises to the membrane. The polypeptide is 2-oxoglutarate and iron-dependent oxygenase domain-containing protein 3 (Ogfod3) (Rattus norvegicus (Rat)).